The primary structure comprises 133 residues: Small ribosomal subunit protein bS16 (133 aa).

Positions 99-133 (EKWQQNQTERRQKRLAVKTRRRQAKKAAEAKGAEA) are disordered. Basic residues predominate over residues 109–123 (RQKRLAVKTRRRQAK). Residues 124–133 (KAAEAKGAEA) show a composition bias toward basic and acidic residues.

This sequence belongs to the bacterial ribosomal protein bS16 family.

The chain is Small ribosomal subunit protein bS16 from Chlorobium limicola (strain DSM 245 / NBRC 103803 / 6330).